Here is a 377-residue protein sequence, read N- to C-terminus: Succinyl-diaminopimelate desuccinylase (377 aa).

Zn(2+) is bound at residue His66. The active site involves Asp68. Zn(2+) is bound at residue Asp99. The active-site Proton acceptor is the Glu133. Zn(2+)-binding residues include Glu134, Glu163, and His349.

The protein belongs to the peptidase M20A family. DapE subfamily. As to quaternary structure, homodimer. Zn(2+) serves as cofactor. Co(2+) is required as a cofactor.

It catalyses the reaction N-succinyl-(2S,6S)-2,6-diaminopimelate + H2O = (2S,6S)-2,6-diaminopimelate + succinate. It participates in amino-acid biosynthesis; L-lysine biosynthesis via DAP pathway; LL-2,6-diaminopimelate from (S)-tetrahydrodipicolinate (succinylase route): step 3/3. Its function is as follows. Catalyzes the hydrolysis of N-succinyl-L,L-diaminopimelic acid (SDAP), forming succinate and LL-2,6-diaminopimelate (DAP), an intermediate involved in the bacterial biosynthesis of lysine and meso-diaminopimelic acid, an essential component of bacterial cell walls. This Legionella pneumophila (strain Corby) protein is Succinyl-diaminopimelate desuccinylase.